The primary structure comprises 336 residues: Vomeronasal type-1 receptor 102 (336 aa).

At 1-42 (MVGVQICQGMTSEILFFSLQPQFSNMMNKNSRLHIDSNIRNT) the chain is on the extracellular side. Residues 43 to 63 (FFTEIGIGVSANSLLLLFNIF) traverse the membrane as a helical segment. Over 64–75 (KFIHGQRSRLTD) the chain is Cytoplasmic. The chain crosses the membrane as a helical span at residues 76 to 96 (LPIGLLSLINLLMLLIMACIA). The Extracellular portion of the chain corresponds to 97–120 (TDIFISCRRWDDIICKSLLYLYRT). Cysteine 111 and cysteine 198 form a disulfide bridge. The helical transmembrane segment at 121-140 (FRGLSLSTTCLLSVLQAIIL) threads the bilayer. At 141–157 (SPRSSCLAKYKHKPPHH) the chain is on the cytoplasmic side. A helical membrane pass occupies residues 158-178 (IFCAMLFLSVLYMFISSHLLL). The Extracellular segment spans residues 179 to 213 (SIIATPNLTTNDFIHVSQSCSILPMSYLMQSMFST). An N-linked (GlcNAc...) asparagine glycan is attached at asparagine 185. The helical transmembrane segment at 214–234 (LLAIRNVFLISLIVLSTWYMV) threads the bilayer. Topologically, residues 235 to 264 (ALLCRHRKQTRHLQDTSLSRKASPEQRATR) are cytoplasmic. Residues 265–285 (SILMLRSLFVLMSIFDSIVSC) form a helical membrane-spanning segment. Residues 286–296 (SRTMYLNDPTS) are Extracellular-facing. A helical membrane pass occupies residues 297 to 317 (YSIQLLVVHIYATVSPFVFMI). Over 318–336 (TEKHIVNYLKSMYVRVLNV) the chain is Cytoplasmic.

It belongs to the G-protein coupled receptor 1 family. In terms of tissue distribution, expressed in 1-4% of neurons of the vomeronasal organ. Only one pheromone receptor gene may be expressed in a particular neuron. Not expressed in the main olfactory epithelium.

Its subcellular location is the cell membrane. Putative pheromone receptor implicated in the regulation of social as well as reproductive behavior. This is Vomeronasal type-1 receptor 102 (Vom1r102) from Rattus norvegicus (Rat).